Reading from the N-terminus, the 325-residue chain is ATP synthase subunit gamma, mitochondrial (325 aa).

Residues 1–42 (MAMAVFRREGRRLLPSIAARPIAAIRSPLSSDQEEGLLGVRS) constitute a mitochondrion transit peptide.

Belongs to the ATPase gamma chain family. F-type ATPases have 2 components, CF(1) - the catalytic core - and CF(0) - the membrane proton channel. CF(1) has five subunits: alpha(3), beta(3), gamma(1), delta(1), epsilon(1). CF(0) has three main subunits: a, b and c.

It localises to the mitochondrion. The protein resides in the mitochondrion inner membrane. In terms of biological role, mitochondrial membrane ATP synthase (F(1)F(0) ATP synthase or Complex V) produces ATP from ADP in the presence of a proton gradient across the membrane which is generated by electron transport complexes of the respiratory chain. F-type ATPases consist of two structural domains, F(1) - containing the extramembraneous catalytic core, and F(0) - containing the membrane proton channel, linked together by a central stalk and a peripheral stalk. During catalysis, ATP synthesis in the catalytic domain of F(1) is coupled via a rotary mechanism of the central stalk subunits to proton translocation. Part of the complex F(1) domain and the central stalk which is part of the complex rotary element. The gamma subunit protrudes into the catalytic domain formed of alpha(3)beta(3). Rotation of the central stalk against the surrounding alpha(3)beta(3) subunits leads to hydrolysis of ATP in three separate catalytic sites on the beta subunits. This Arabidopsis thaliana (Mouse-ear cress) protein is ATP synthase subunit gamma, mitochondrial (ATPC).